A 393-amino-acid chain; its full sequence is Protein TsgA (393 aa).

The Cytoplasmic portion of the chain corresponds to 1–10; that stretch reads MTNSNRIKLT. The helical transmembrane segment at 11-31 threads the bilayer; it reads WISFLSYALTGALVIVTGMVM. Topologically, residues 32-50 are periplasmic; the sequence is GNIADYFHLPVSSMSNTFT. The chain crosses the membrane as a helical span at residues 51–71; it reads FLNAGILISIFLNAWLMEIIP. Residues 72–77 lie on the Cytoplasmic side of the membrane; the sequence is LKTQLR. Residues 78-98 form a helical membrane-spanning segment; that stretch reads FGFILMVLAVAGLMFGHSLAL. Topologically, residues 99 to 100 are periplasmic; the sequence is FS. The chain crosses the membrane as a helical span at residues 101–121; that stretch reads AAMFVLGLVSGITMSIGTFLI. At 122–133 the chain is on the cytoplasmic side; the sequence is TQLYEGRQRGSR. Residues 134–154 form a helical membrane-spanning segment; that stretch reads LLFTDSFFSMAGMIFPMVAAF. Topologically, residues 155–161 are periplasmic; that stretch reads LLARSIE. Residues 162–182 form a helical membrane-spanning segment; sequence WYWVYACIGLVYLAIFILTFG. Residues 183-205 are Cytoplasmic-facing; the sequence is CEFPALGKHAQHSQAPVVKEKWG. The chain crosses the membrane as a helical span at residues 206 to 226; it reads IGVLFLAVAALCYILGQLGFI. At 227-244 the chain is on the periplasmic side; sequence SWVPEYAKGLGMSLNDAG. Residues 245–265 form a helical membrane-spanning segment; the sequence is ALVSDFWMSYMFGMWAFSFIL. The Cytoplasmic portion of the chain corresponds to 266–272; that stretch reads RFFDLQR. A helical membrane pass occupies residues 273–293; that stretch reads ILTVLAGMAAVLMYLFITGTQ. Residues 294 to 297 are Periplasmic-facing; that stretch reads AHMP. Residues 298–318 form a helical membrane-spanning segment; that stretch reads WFILTLGFFSSAIYTSIITLG. Residues 319-331 are Cytoplasmic-facing; it reads SQQTKVASPKLVN. The chain crosses the membrane as a helical span at residues 332–352; the sequence is FILTCGTIGTMLTFVVTGPIV. At 353-360 the chain is on the periplasmic side; it reads AHSGPQAA. Residues 361–381 traverse the membrane as a helical segment; it reads LLTANGLYAVVFVMCFALGFV. Residues 382–393 lie on the Cytoplasmic side of the membrane; that stretch reads SRHRQHSAPATH.

It belongs to the major facilitator superfamily. TsgA family.

It is found in the cell inner membrane. This is Protein TsgA from Salmonella choleraesuis (strain SC-B67).